Here is a 418-residue protein sequence, read N- to C-terminus: Homoaconitase large subunit (418 aa).

C292, C352, and C355 together coordinate [4Fe-4S] cluster.

This sequence belongs to the aconitase/IPM isomerase family. As to quaternary structure, heterodimer of HacA and HacB. It depends on [4Fe-4S] cluster as a cofactor.

It carries out the reaction (2R,3S)-homoisocitrate = cis-homoaconitate + H2O. It participates in amino-acid biosynthesis; L-lysine biosynthesis via AAA pathway; L-alpha-aminoadipate from 2-oxoglutarate: step 3/5. Its activity is regulated as follows. Is not inhibited by lysine. Its function is as follows. Catalyzes the reversible hydration of cis-homoaconitate ((Z)-but-1-ene-1,2,4-tricarboxylate) to homoisocitrate ((1R,2S)-1-hydroxybutane-1,2,4-tricarboxylate). Can catalyze neither the dehydration of (R)-homocitrate ((2R)-2-hydroxybutane-1,2,4-tricarboxylate) into cis-homoaconitate in vitro, nor the reverse reaction. Is not active toward (S)-homocitrate, cis-aconitate or citrate as substrate. The protein is Homoaconitase large subunit (hacA) of Thermus thermophilus (strain ATCC BAA-163 / DSM 7039 / HB27).